Consider the following 144-residue polypeptide: Superoxide dismutase [Mn], mitochondrial (144 aa).

H10, H58, and D143 together coordinate Mn(2+).

Belongs to the iron/manganese superoxide dismutase family. Homotetramer. Mn(2+) is required as a cofactor.

The protein localises to the mitochondrion matrix. It carries out the reaction 2 superoxide + 2 H(+) = H2O2 + O2. Its function is as follows. Destroys superoxide anion radicals which are normally produced within the cells and which are toxic to biological systems. The polypeptide is Superoxide dismutase [Mn], mitochondrial (Apostichopus californicus (California sea cucumber)).